The sequence spans 301 residues: GTPase Era (301 aa).

Residues 6-173 (KSGFVAIVGR…LEQTNANLEI (168 aa)) enclose the Era-type G domain. Residues 14–21 (GRPNVGKS) are G1. 14–21 (GRPNVGKS) contacts GTP. The G2 stretch occupies residues 40–44 (QTTRN). Residues 61-64 (DTPG) form a G3 region. Residues 61 to 65 (DTPGI) and 123 to 126 (NKID) each bind GTP. Residues 123–126 (NKID) form a G4 region. The interval 152–154 (ISA) is G5. The KH type-2 domain occupies 204–282 (TREEVPHSVA…FLEIWVKVQK (79 aa)).

The protein belongs to the TRAFAC class TrmE-Era-EngA-EngB-Septin-like GTPase superfamily. Era GTPase family. As to quaternary structure, monomer.

The protein localises to the cytoplasm. The protein resides in the cell membrane. Its function is as follows. An essential GTPase that binds both GDP and GTP, with rapid nucleotide exchange. Plays a role in 16S rRNA processing and 30S ribosomal subunit biogenesis and possibly also in cell cycle regulation and energy metabolism. The polypeptide is GTPase Era (Listeria monocytogenes serotype 4b (strain F2365)).